A 391-amino-acid chain; its full sequence is Galactokinase (391 aa).

A substrate-binding site is contributed by 34–37; it reads EHTD. ATP is bound at residue 121-127; it reads GAGLSSS. Residues serine 127 and glutamate 159 each coordinate Mg(2+). Aspartate 171 acts as the Proton acceptor in catalysis. Residue tyrosine 220 participates in substrate binding.

It belongs to the GHMP kinase family. GalK subfamily.

It is found in the cytoplasm. It catalyses the reaction alpha-D-galactose + ATP = alpha-D-galactose 1-phosphate + ADP + H(+). Its pathway is carbohydrate metabolism; galactose metabolism. Functionally, catalyzes the transfer of the gamma-phosphate of ATP to D-galactose to form alpha-D-galactose-1-phosphate (Gal-1-P). The sequence is that of Galactokinase from Roseiflexus sp. (strain RS-1).